The sequence spans 586 residues: Mitogen-activated protein kinase 15 (586 aa).

The Protein kinase domain maps to 14-305; the sequence is YDIKKRLGKG…AEEALEHPYV (292 aa). ATP is bound by residues 20 to 28 and Lys-43; that span reads LGKGAYGIV. Catalysis depends on Asp-138, which acts as the Proton acceptor. Disordered stretches follow at residues 354 to 506 and 520 to 539; these read QKRE…DAPP and NQRTAPIQGRDPRSAPRFGR. Over residues 382–393 the composition is skewed to pro residues; that stretch reads PAPPAGTNPAPQ. Positions 400-414 are enriched in low complexity; the sequence is PQRAAIAAPNQPPAQ. Residues 415 to 439 are compositionally biased toward polar residues; that stretch reads KDSTQQSPKIKAPSSNPITHSTTHG. The span at 452–463 shows a compositional bias: low complexity; the sequence is AGQQGAAGTTAQ. A compositionally biased stretch (basic and acidic residues) spans 464 to 473; the sequence is EVRKEVESRS. Residues 484-498 are compositionally biased toward polar residues; it reads FSHSQQARAAATNSA.

As to quaternary structure, interacts with dvl2.

It localises to the cytoplasm. It is found in the cytoskeleton. The protein localises to the cilium basal body. The protein resides in the cell projection. Its subcellular location is the cilium. It localises to the cell junction. It carries out the reaction L-seryl-[protein] + ATP = O-phospho-L-seryl-[protein] + ADP + H(+). It catalyses the reaction L-threonyl-[protein] + ATP = O-phospho-L-threonyl-[protein] + ADP + H(+). In terms of biological role, atypical MAPK protein that regulates ciliogenesis by phosphorylating rcsd1 through its binding with dvl2. The sequence is that of Mitogen-activated protein kinase 15 from Xenopus laevis (African clawed frog).